Consider the following 111-residue polypeptide: T cell receptor beta variable 20-1 (111 aa).

Positions 1-15 (MLLLLLLLGPGSGLG) are cleaved as a signal peptide. The region spanning 16–111 (AVVSQHPSRV…DSSFYICSAR (96 aa)) is the Ig-like domain. A disulfide bridge connects residues cysteine 37 and cysteine 108.

In terms of assembly, alpha-beta TR is a heterodimer composed of an alpha and beta chain; disulfide-linked. The alpha-beta TR is associated with the transmembrane signaling CD3 coreceptor proteins to form the TR-CD3 (TcR or TCR). The assembly of alpha-beta TR heterodimers with CD3 occurs in the endoplasmic reticulum where a single alpha-beta TR heterodimer associates with one CD3D-CD3E heterodimer, one CD3G-CD3E heterodimer and one CD247 homodimer forming a stable octameric structure. CD3D-CD3E and CD3G-CD3E heterodimers preferentially associate with TR alpha and TR beta chains, respectively. The association of the CD247 homodimer is the last step of TcR assembly in the endoplasmic reticulum and is required for transport to the cell surface.

The protein resides in the cell membrane. V region of the variable domain of T cell receptor (TR) beta chain that participates in the antigen recognition. Alpha-beta T cell receptors are antigen specific receptors which are essential to the immune response and are present on the cell surface of T lymphocytes. Recognize peptide-major histocompatibility (MH) (pMH) complexes that are displayed by antigen presenting cells (APC), a prerequisite for efficient T cell adaptive immunity against pathogens. Binding of alpha-beta TR to pMH complex initiates TR-CD3 clustering on the cell surface and intracellular activation of LCK that phosphorylates the ITAM motifs of CD3G, CD3D, CD3E and CD247 enabling the recruitment of ZAP70. In turn ZAP70 phosphorylates LAT, which recruits numerous signaling molecules to form the LAT signalosome. The LAT signalosome propagates signal branching to three major signaling pathways, the calcium, the mitogen-activated protein kinase (MAPK) kinase and the nuclear factor NF-kappa-B (NF-kB) pathways, leading to the mobilization of transcription factors that are critical for gene expression and essential for T cell growth and differentiation. The T cell repertoire is generated in the thymus, by V-(D)-J rearrangement. This repertoire is then shaped by intrathymic selection events to generate a peripheral T cell pool of self-MH restricted, non-autoaggressive T cells. Post-thymic interaction of alpha-beta TR with the pMH complexes shapes TR structural and functional avidity. The chain is T cell receptor beta variable 20-1 from Homo sapiens (Human).